The following is a 367-amino-acid chain: mRNA-decapping enzyme-like protein (367 aa).

3 disordered regions span residues 144–179 (PKAS…RDAP), 196–246 (NTAS…SSSP), and 299–333 (PNNA…PTGP). Residues 196–211 (NTASGSASGPYQSSAI) show a composition bias toward polar residues. Low complexity predominate over residues 212–234 (PHQPHQPHQPTIAPPVAAAAPPQ). The span at 299–309 (PNNASHQQRSY) shows a compositional bias: polar residues. The span at 315–331 (QPFPPPTPPPSLAPAPT) shows a compositional bias: pro residues.

It belongs to the DCP1 family. As to quaternary structure, homodimer. Component of the decapping complex. Interacts with DCP2 and DCP5. Interacts with BCHA1. As to expression, expressed in seedlings, mostly in root tips, root hairs, and the vascular system. Also present in roots, leaves, stems, and flowers.

Its subcellular location is the cytoplasm. It localises to the P-body. Its function is as follows. As a component of the decapping complex, involved in the degradation of mRNAs. Essential for postembryonic development. This Arabidopsis thaliana (Mouse-ear cress) protein is mRNA-decapping enzyme-like protein.